We begin with the raw amino-acid sequence, 65 residues long: Seminal plasma acrosin inhibitor A1 (65 aa).

Residues T1–E59 enclose the Kazal-like domain. Intrachain disulfides connect C7–C39, C17–C36, and C25–C57. S12 carries an O-linked (GalNAc...) serine glycan. O-linked (GalNAc...) serine glycosylation is present at S62.

Post-translationally, the identity of the O-linked saccharides are not reported in Ref.1. The O-linked polysaccharides on Ser-12 and Ser-62 are probably the mucin type linked to GalNAc. Seminal plasma.

Its subcellular location is the secreted. Its function is as follows. Inhibits acrosin. This chain is Seminal plasma acrosin inhibitor A1, found in Sus scrofa (Pig).